The chain runs to 452 residues: MERRIFGLETEYGVTCTYRGQRRLSPDEVARYLFRRVVSWGRSSNVFLRNGARLYLDVGSHPEYATPECDSVADLVAHDRAGERILEGLLVDAEKRLHDEGIAGEIYLFKNNTDSAGNSYGCHENYLVSRHGEFGRLADVLIPFLVTRQLICGAGKVLQTPRGAVYCLSQRAEHIWEGVSSATTRSRPIINTRDEPHADAERYRRLHVIVGDSNMNEVTTLLKVGAADIVLRMIESGVVMRDLTLENPIRAIREVSHDITGRRKVRLASGKEISALEIQQEYLAKATEFVERRGGDQTAKRVVELWGRVLSAVETGDLEPVAREIDWVTKLRLIERYQRKHDLPLSHPRVAQMDLAYHDLRRGRGLYGLLERRGQVDRAATDPEIFEAKETPPQTTRARLRGEFIRHAQEKRRDFTVDWVHLKLNDQAQRTVLCKDPFRAYDERVERLIASM.

Glu-9 contacts Mg(2+). Arg-53 contributes to the ATP binding site. Position 55 (Tyr-55) interacts with Mg(2+). Asp-57 acts as the Proton acceptor in catalysis. Glu-63 lines the Mg(2+) pocket. Residues Thr-66 and Trp-419 each contribute to the ATP site.

The protein belongs to the Pup ligase/Pup deamidase family. Pup-conjugating enzyme subfamily.

It carries out the reaction ATP + [prokaryotic ubiquitin-like protein]-L-glutamate + [protein]-L-lysine = ADP + phosphate + N(6)-([prokaryotic ubiquitin-like protein]-gamma-L-glutamyl)-[protein]-L-lysine.. It functions in the pathway protein degradation; proteasomal Pup-dependent pathway. The protein operates within protein modification; protein pupylation. Its function is as follows. Catalyzes the covalent attachment of the prokaryotic ubiquitin-like protein modifier Pup to the proteasomal substrate proteins, thereby targeting them for proteasomal degradation. This tagging system is termed pupylation. The ligation reaction involves the side-chain carboxylate of the C-terminal glutamate of Pup and the side-chain amino group of a substrate lysine. This is Pup--protein ligase from Salinispora tropica (strain ATCC BAA-916 / DSM 44818 / JCM 13857 / NBRC 105044 / CNB-440).